The sequence spans 354 residues: Uroporphyrinogen decarboxylase (354 aa).

Substrate contacts are provided by residues 27–31, Asp-77, Tyr-154, Thr-209, and His-327; that span reads RQAGR.

The protein belongs to the uroporphyrinogen decarboxylase family. Homodimer.

The protein localises to the cytoplasm. It carries out the reaction uroporphyrinogen III + 4 H(+) = coproporphyrinogen III + 4 CO2. It participates in porphyrin-containing compound metabolism; protoporphyrin-IX biosynthesis; coproporphyrinogen-III from 5-aminolevulinate: step 4/4. Functionally, catalyzes the decarboxylation of four acetate groups of uroporphyrinogen-III to yield coproporphyrinogen-III. The chain is Uroporphyrinogen decarboxylase from Salmonella dublin (strain CT_02021853).